Here is a 220-residue protein sequence, read N- to C-terminus: Fructose-6-phosphate aldolase 1 (220 aa).

Lys-85 serves as the catalytic Schiff-base intermediate with substrate.

This sequence belongs to the transaldolase family. Type 3A subfamily. As to quaternary structure, homodecamer. Five subunits are arranged as a pentamer, and two ring-like pentamers pack like a donut to form the decamer.

It is found in the cytoplasm. It catalyses the reaction beta-D-fructose 6-phosphate = dihydroxyacetone + D-glyceraldehyde 3-phosphate. Inhibited by glycerol, inorganic phosphate and arabinose 5-phosphate. Its function is as follows. Catalyzes the reversible formation of fructose 6-phosphate from dihydroxyacetone (DHA) and D-glyceraldehyde 3-phosphate via an aldolization reaction. Can utilize several aldehydes as acceptor compounds in vitro, and hydroxyacetone (HA) or 1-hydroxy-butan-2-one as alternative donor substrate. Is also able to catalyze the direct stereoselective self-aldol addition of glycolaldehyde to furnish D-(-)-threose, and cross-aldol reactions of glycolaldehyde to other aldehyde acceptors. Is not able to cleave fructose, fructose 1-phosphate, glucose 6-phosphate, sedoheptulose 1,7-bisphosphate, xylulose 5-phosphate, ribulose 5-phosphate, and fructose 1,6-bisphosphate; cannot use dihydroxyacetone phosphate as donor compound nor D-glyceraldehyde as acceptor. Does not display transaldolase activity. This Escherichia coli (strain K12) protein is Fructose-6-phosphate aldolase 1 (fsaA).